A 274-amino-acid chain; its full sequence is Large ribosomal subunit protein uL2cz/uL2cy (274 aa).

Disordered stretches follow at residues 1–25 (MAIH…VKSN) and 224–274 (NPVD…RRSK).

Belongs to the universal ribosomal protein uL2 family. In terms of assembly, part of the 50S ribosomal subunit.

It localises to the plastid. Its subcellular location is the chloroplast. This Cucumis sativus (Cucumber) protein is Large ribosomal subunit protein uL2cz/uL2cy (rpl2-A).